The following is a 260-amino-acid chain: Voltage-dependent calcium channel gamma-6 subunit (260 aa).

The disordered stretch occupies residues 14 to 33 (RRGAAGRRRAHGQGRSGLTP). Positions 15–25 (RGAAGRRRAHG) are enriched in basic residues. Transmembrane regions (helical) follow at residues 43–63 (LLLAAVGATLAVLSVGTEFWV), 143–163 (VIAVLGLAVMALGCLCIIMVL), 169–189 (FLLRVGAVCFGLSGLLLLVSL), and 221–241 (LGCGVGAGLILLLGAGCFLLL).

This sequence belongs to the PMP-22/EMP/MP20 family. CACNG subfamily. As to quaternary structure, interacts with CACNA1C. Identified in a complex with the L-type calcium channel subunits CACNA1C, CACNA2D1 and either CACNB1 or CACNB2. Detected in heart left ventricle.

Its subcellular location is the cell membrane. Its function is as follows. Regulates the activity of L-type calcium channels that contain CACNA1C as pore-forming subunit. This chain is Voltage-dependent calcium channel gamma-6 subunit (CACNG6), found in Homo sapiens (Human).